Reading from the N-terminus, the 123-residue chain is Small ribosomal subunit protein uS13 (123 aa).

A disordered region spans residues 93-123; that stretch reads RRNLPVRGQKTKTNARTRKGPKRAIGGKKKK.

This sequence belongs to the universal ribosomal protein uS13 family. As to quaternary structure, part of the 30S ribosomal subunit. Forms a loose heterodimer with protein S19. Forms two bridges to the 50S subunit in the 70S ribosome.

Its function is as follows. Located at the top of the head of the 30S subunit, it contacts several helices of the 16S rRNA. In the 70S ribosome it contacts the 23S rRNA (bridge B1a) and protein L5 of the 50S subunit (bridge B1b), connecting the 2 subunits; these bridges are implicated in subunit movement. Contacts the tRNAs in the A and P-sites. This Clostridium botulinum (strain Kyoto / Type A2) protein is Small ribosomal subunit protein uS13.